The following is a 299-amino-acid chain: Glutamate formimidoyltransferase (299 aa).

Histidine 82 acts as the For formimidoyltransferase activity in catalysis. 163 to 172 serves as a coordination point for folate; the sequence is GDRKIHPTAG.

The protein belongs to the formiminotransferase family.

The protein resides in the cytoplasm. It catalyses the reaction (6S)-5-formyl-5,6,7,8-tetrahydrofolate + L-glutamate = N-formyl-L-glutamate + (6S)-5,6,7,8-tetrahydrofolate + H(+). The enzyme catalyses 5-formimidoyltetrahydrofolate + L-glutamate = N-formimidoyl-L-glutamate + (6S)-5,6,7,8-tetrahydrofolate. It carries out the reaction (6S)-5-formyl-5,6,7,8-tetrahydrofolate + ATP = (6R)-5,10-methenyltetrahydrofolate + ADP + phosphate. It participates in amino-acid degradation; L-histidine degradation into L-glutamate; L-glutamate from N-formimidoyl-L-glutamate (transferase route): step 1/1. Its pathway is one-carbon metabolism; tetrahydrofolate interconversion. Catalyzes the transfer of the formyl group from N-formylglutamate to tetrahydrofolate (THF) to yield 5-formyltetrahydrofolate (5-CHO-THF) and glutamate (Glu). The triglutamate form of 5-CHO-THF (5-CHO-THF-Glu3) can also be used as substrate. It can also catalyze the transfer of the formimino group from N-formiminoglutamate to tetrahydrofolate (THF) to yield 5-formiminotetrahydrofolate (5-NH=CH-THF) and glutamate (Glu). It can replace YgfA to catalyze the irreversible ATP-dependent transformation of 5-CHO-THF to form 5,10-methenyltetrahydrofolate (5,10-CH=THF). This Streptococcus pyogenes serotype M1 protein is Glutamate formimidoyltransferase.